The chain runs to 713 residues: Zinc finger and BTB domain-containing protein 1 (713 aa).

A Glycyl lysine isopeptide (Lys-Gly) (interchain with G-Cter in SUMO2) cross-link involves residue lysine 3. In terms of domain architecture, BTB spans 24 to 91 (CDCCIAIDDI…MYLGKIMTAP (68 aa)). Glycyl lysine isopeptide (Lys-Gly) (interchain with G-Cter in SUMO2) cross-links involve residues lysine 200 and lysine 205. A C2H2-type 1; atypical zinc finger spans residues 216–242 (FTCDSCGFGFSCEKLLDEHVLTCTNRH). Glycyl lysine isopeptide (Lys-Gly) (interchain with G-Cter in SUMO2) cross-links involve residues lysine 261, lysine 266, lysine 276, lysine 284, lysine 304, lysine 316, lysine 328, lysine 340, and lysine 346. The disordered stretch occupies residues 270-319 (AEKDSSKTFSAQPDKYREDANQAPDDSASTTGSRKSTVEAGIAGEEKSRA). Serine 355 is subject to Phosphoserine. Threonine 356 carries the phosphothreonine modification. Residue lysine 381 forms a Glycyl lysine isopeptide (Lys-Gly) (interchain with G-Cter in SUMO2) linkage. The segment at 448 to 470 (CACGKCGQILVKGRQLQEHAQRC) adopts a C2H2-type 2; atypical zinc-finger fold. A Glycyl lysine isopeptide (Lys-Gly) (interchain with G-Cter in SUMO2) cross-link involves residue lysine 528. A UBZ-type zinc finger spans residues 533–558 (PFRCPNCGQRFETENLVVEHMSSCLD). Residue lysine 563 forms a Glycyl lysine isopeptide (Lys-Gly) (interchain with G-Cter in SUMO2) linkage. 5 C2H2-type zinc fingers span residues 578-600 (HFCN…YTVH), 606-628 (FVCQ…NDMH), 634-656 (YVCS…MISH), 662-684 (TICQ…MDVH), and 686-709 (YTCG…NAKH).

As to quaternary structure, homodimer. Homodimer. Interacts (via BTB domain) with TRIM28 (unphosphorylated or phosphorylated form). Sumoylated with SUMO2 at Lys-328 and to a lesser extent at Lys-266. Sumoylation inhibits its transcriptional repression activity and regulates its subcellular localization. In terms of tissue distribution, expressed strongly in thymus and spleen, less in lymph nodes and peripheral blood mononuclear cells (PBMCs) and weakly in bone marrow. Strongly expressed in immature, but weakly in mature bone marrow-lymphocyte B.

Its subcellular location is the nucleus. It is found in the nucleoplasm. Its function is as follows. Acts as a transcriptional repressor. Represses cAMP-responsive element (CRE)-mediated transcriptional activation. In addition, has a role in translesion DNA synthesis. Requires for UV-inducible RAD18 loading, PCNA monoubiquitination, POLH recruitment to replication factories and efficient translesion DNA synthesis. Plays a key role in the transcriptional regulation of T lymphocyte development. The protein is Zinc finger and BTB domain-containing protein 1 (Zbtb1) of Mus musculus (Mouse).